Reading from the N-terminus, the 189-residue chain is Glycerol-3-phosphate acyltransferase (189 aa).

4 helical membrane passes run 1–21, 77–97, 111–131, and 151–171; these read MFWL…AIVL, LQEQ…PVYF, MLMG…LLTF, and LLAW…VMIV.

It belongs to the PlsY family. In terms of assembly, probably interacts with PlsX.

It is found in the cell inner membrane. The catalysed reaction is an acyl phosphate + sn-glycerol 3-phosphate = a 1-acyl-sn-glycero-3-phosphate + phosphate. The protein operates within lipid metabolism; phospholipid metabolism. Catalyzes the transfer of an acyl group from acyl-phosphate (acyl-PO(4)) to glycerol-3-phosphate (G3P) to form lysophosphatidic acid (LPA). This enzyme utilizes acyl-phosphate as fatty acyl donor, but not acyl-CoA or acyl-ACP. This chain is Glycerol-3-phosphate acyltransferase, found in Pseudomonas putida (strain W619).